The primary structure comprises 360 residues: uncharacterized protein (360 aa).

4 to 22 is a binding site for NAD(+); sequence KVLHIGAGGFGERWCDTFL.

Functionally, could be a NAD-dependent oxidoreductase. This is an uncharacterized protein from Sinorhizobium fredii (strain NBRC 101917 / NGR234).